A 258-amino-acid chain; its full sequence is Type III pantothenate kinase (258 aa).

7–14 (DVGNTRLK) lines the ATP pocket. Substrate contacts are provided by residues Tyr96 and 103-106 (GADR). Asp105 acts as the Proton acceptor in catalysis. Thr133 is an ATP binding site. Thr183 contributes to the substrate binding site.

Belongs to the type III pantothenate kinase family. Homodimer. The cofactor is NH4(+). K(+) serves as cofactor.

The protein localises to the cytoplasm. It carries out the reaction (R)-pantothenate + ATP = (R)-4'-phosphopantothenate + ADP + H(+). The protein operates within cofactor biosynthesis; coenzyme A biosynthesis; CoA from (R)-pantothenate: step 1/5. Functionally, catalyzes the phosphorylation of pantothenate (Pan), the first step in CoA biosynthesis. In Acidovorax ebreus (strain TPSY) (Diaphorobacter sp. (strain TPSY)), this protein is Type III pantothenate kinase.